The sequence spans 447 residues: MGEDTDTRKINHSFLRDHSYVTEADVISTVEFNHTGELLATGDKGGRVVIFQREPESKNAPHSQGEYDVYSTFQSHEPEFDYLKSLEIEEKINKIKWLPQQNAAHSLLSTNDKTIKLWKITERDKRPEGYNLKDEEGKLKDLSTVTSLQVPVLKPMDLMVEVSPRRTFANGHTYHINSISVNSDCETYMSADDLRINLWHLAITDRSFNIVDIKPANMEDLTEVITASEFHPHHCNLFVYSSSKGSLRLCDMRAAALCDKHSKLFEEPEDPSNRSFFSEIISSVSDVKFSHSGRYMLTRDYLTVKVWDLNMEARPIETYQVHDYLRSKLCSLYESDCIFDKFECAWNGSDSVIMTGAYNNFFRMFDRNTKRDVTLEASRESSKPRAVLKPRRVCVGGKRRRDDISVDSLDFTKKILHTAWHPAENIIAIAATNNLYIFQDKVNSDMH.

WD repeat units follow at residues 22 to 61 (TEAD…KNAP), 87 to 128 (EIEE…KRPE), 171 to 209 (GHTY…RSFN), 220 to 260 (DLTE…LCDK), 279 to 317 (EIIS…RPIE), 334 to 375 (ESDC…DVTL), and 410 to 446 (DFTK…NSDM).

It belongs to the phosphatase 2A regulatory subunit B family. As to quaternary structure, PP2A consists of a common heterodimeric core enzyme, composed of a 36 kDa catalytic subunit (subunit C) and a 65 kDa constant regulatory subunit (PR65 or subunit A), that associates with a variety of regulatory subunits. Proteins that associate with the core dimer include three families of regulatory subunits B (the R2/B/PR55/B55, R3/B''/PR72/PR130/PR59 and R5/B'/B56 families), the 48 kDa variable regulatory subunit, viral proteins, and cell signaling molecules. Interacts with IER5.

In terms of biological role, the B regulatory subunit might modulate substrate selectivity and catalytic activity, and might also direct the localization of the catalytic enzyme to a particular subcellular compartment. This chain is Serine/threonine-protein phosphatase 2A 55 kDa regulatory subunit B gamma isoform (Ppp2r2c), found in Mus musculus (Mouse).